The primary structure comprises 785 residues: Leucyl aminopeptidase (785 aa).

Substrate-binding positions include E106 and 238-242 (GAMEN). H273 serves as a coordination point for Zn(2+). Residue E274 is the Proton acceptor of the active site. Zn(2+) is bound by residues H277 and E296.

It belongs to the peptidase M1 family. In terms of assembly, co-immunoprecipitates with the 60 kDa chaperonin. The cofactor is Zn(2+). Post-translationally, can be phosphorylated by cell extracts.

The protein resides in the cytoplasm. The enzyme catalyses Release of an N-terminal amino acid, Xaa-|-Yaa-, in which Xaa is preferably Leu, but may be other amino acids including Pro although not Arg or Lys, and Yaa may be Pro. Amino acid amides and methyl esters are also readily hydrolyzed, but rates on arylamides are exceedingly low.. In terms of biological role, preferentially acts as a leucyl-aminopeptidase, although it also has activity against other substrates. The polypeptide is Leucyl aminopeptidase (ape2) (Saccharolobus solfataricus (strain ATCC 35092 / DSM 1617 / JCM 11322 / P2) (Sulfolobus solfataricus)).